The following is a 722-amino-acid chain: Ribosomal RNA large subunit methyltransferase K/L (722 aa).

Residues 55 to 167 (TGYRACLWSR…GNEGTLYLDL (113 aa)) form the THUMP domain.

Belongs to the methyltransferase superfamily. RlmKL family.

Its subcellular location is the cytoplasm. The enzyme catalyses guanosine(2445) in 23S rRNA + S-adenosyl-L-methionine = N(2)-methylguanosine(2445) in 23S rRNA + S-adenosyl-L-homocysteine + H(+). It carries out the reaction guanosine(2069) in 23S rRNA + S-adenosyl-L-methionine = N(2)-methylguanosine(2069) in 23S rRNA + S-adenosyl-L-homocysteine + H(+). Its function is as follows. Specifically methylates the guanine in position 2445 (m2G2445) and the guanine in position 2069 (m7G2069) of 23S rRNA. In Desulfotalea psychrophila (strain LSv54 / DSM 12343), this protein is Ribosomal RNA large subunit methyltransferase K/L.